The chain runs to 159 residues: 6,7-dimethyl-8-ribityllumazine synthase (159 aa).

Residues tryptophan 27, 62-64 (SWE), and 86-88 (VLI) contribute to the 5-amino-6-(D-ribitylamino)uracil site. 91-92 (ST) is a (2S)-2-hydroxy-3-oxobutyl phosphate binding site. Histidine 94 acts as the Proton donor in catalysis. 5-amino-6-(D-ribitylamino)uracil is bound at residue leucine 119. Position 133 (arginine 133) interacts with (2S)-2-hydroxy-3-oxobutyl phosphate.

Homopentamer.

It carries out the reaction (2S)-2-hydroxy-3-oxobutyl phosphate + 5-amino-6-(D-ribitylamino)uracil = 6,7-dimethyl-8-(1-D-ribityl)lumazine + phosphate + 2 H2O + H(+). It participates in cofactor biosynthesis; riboflavin biosynthesis; riboflavin from 2-hydroxy-3-oxobutyl phosphate and 5-amino-6-(D-ribitylamino)uracil: step 1/2. With respect to regulation, competitively inhibited by riboflavin (Ki of 17 uM). In terms of biological role, catalyzes the formation of 6,7-dimethyl-8-ribityllumazine by condensation of 5-amino-6-(D-ribitylamino)uracil with 3,4-dihydroxy-2-butanone 4-phosphate. This is the penultimate step in the biosynthesis of riboflavin. Also binds riboflavin with an unexpected high affinity. In Schizosaccharomyces pombe (strain 972 / ATCC 24843) (Fission yeast), this protein is 6,7-dimethyl-8-ribityllumazine synthase (rib4).